Consider the following 259-residue polypeptide: 5'-nucleotidase SurE (259 aa).

Positions 8, 9, 39, and 96 each coordinate a divalent metal cation.

It belongs to the SurE nucleotidase family. A divalent metal cation is required as a cofactor.

The protein resides in the cytoplasm. It carries out the reaction a ribonucleoside 5'-phosphate + H2O = a ribonucleoside + phosphate. In terms of biological role, nucleotidase that shows phosphatase activity on nucleoside 5'-monophosphates. In Pelotomaculum thermopropionicum (strain DSM 13744 / JCM 10971 / SI), this protein is 5'-nucleotidase SurE.